We begin with the raw amino-acid sequence, 243 residues long: 1-(5-phosphoribosyl)-5-[(5-phosphoribosylamino)methylideneamino] imidazole-4-carboxamide isomerase (243 aa).

Aspartate 8 functions as the Proton acceptor in the catalytic mechanism. Aspartate 129 acts as the Proton donor in catalysis.

This sequence belongs to the HisA/HisF family.

The protein resides in the cytoplasm. It catalyses the reaction 1-(5-phospho-beta-D-ribosyl)-5-[(5-phospho-beta-D-ribosylamino)methylideneamino]imidazole-4-carboxamide = 5-[(5-phospho-1-deoxy-D-ribulos-1-ylimino)methylamino]-1-(5-phospho-beta-D-ribosyl)imidazole-4-carboxamide. Its pathway is amino-acid biosynthesis; L-histidine biosynthesis; L-histidine from 5-phospho-alpha-D-ribose 1-diphosphate: step 4/9. In Brucella abortus (strain 2308), this protein is 1-(5-phosphoribosyl)-5-[(5-phosphoribosylamino)methylideneamino] imidazole-4-carboxamide isomerase.